A 73-amino-acid polypeptide reads, in one-letter code: DNA-directed RNA polymerase subunit omega (73 aa).

It belongs to the RNA polymerase subunit omega family. In terms of assembly, the RNAP catalytic core consists of 2 alpha, 1 beta, 1 beta' and 1 omega subunit. When a sigma factor is associated with the core the holoenzyme is formed, which can initiate transcription.

It carries out the reaction RNA(n) + a ribonucleoside 5'-triphosphate = RNA(n+1) + diphosphate. Promotes RNA polymerase assembly. Latches the N- and C-terminal regions of the beta' subunit thereby facilitating its interaction with the beta and alpha subunits. The chain is DNA-directed RNA polymerase subunit omega from Oleidesulfovibrio alaskensis (strain ATCC BAA-1058 / DSM 17464 / G20) (Desulfovibrio alaskensis).